The chain runs to 792 residues: Phenylalanine--tRNA ligase beta subunit (792 aa).

The tRNA-binding domain occupies 39 to 147 (GESLGQVVVA…DDAPVGQALA (109 aa)). Positions 400–475 (PQPARIRLRR…RIHGYDRVPT (76 aa)) constitute a B5 domain. The Mg(2+) site is built by D453, D459, E462, and E463. In terms of domain architecture, FDX-ACB spans 698 to 791 (SRFPSVRRDL…IEREHRARIR (94 aa)).

This sequence belongs to the phenylalanyl-tRNA synthetase beta subunit family. Type 1 subfamily. Tetramer of two alpha and two beta subunits. The cofactor is Mg(2+).

Its subcellular location is the cytoplasm. The enzyme catalyses tRNA(Phe) + L-phenylalanine + ATP = L-phenylalanyl-tRNA(Phe) + AMP + diphosphate + H(+). The protein is Phenylalanine--tRNA ligase beta subunit of Xanthomonas euvesicatoria pv. vesicatoria (strain 85-10) (Xanthomonas campestris pv. vesicatoria).